We begin with the raw amino-acid sequence, 430 residues long: Serine--tRNA ligase (430 aa).

The segment at 44 to 65 is disordered; sequence TESLQAERNSRSKSIGAAKARG. 237 to 239 is an L-serine binding site; it reads TAE. Residue 268-270 coordinates ATP; the sequence is RSE. An L-serine-binding site is contributed by Glu-291. Residue 355–358 participates in ATP binding; sequence EISS. Residue Ser-391 coordinates L-serine.

This sequence belongs to the class-II aminoacyl-tRNA synthetase family. Type-1 seryl-tRNA synthetase subfamily. As to quaternary structure, homodimer. The tRNA molecule binds across the dimer.

The protein localises to the cytoplasm. It catalyses the reaction tRNA(Ser) + L-serine + ATP = L-seryl-tRNA(Ser) + AMP + diphosphate + H(+). It carries out the reaction tRNA(Sec) + L-serine + ATP = L-seryl-tRNA(Sec) + AMP + diphosphate + H(+). It functions in the pathway aminoacyl-tRNA biosynthesis; selenocysteinyl-tRNA(Sec) biosynthesis; L-seryl-tRNA(Sec) from L-serine and tRNA(Sec): step 1/1. Its function is as follows. Catalyzes the attachment of serine to tRNA(Ser). Is also able to aminoacylate tRNA(Sec) with serine, to form the misacylated tRNA L-seryl-tRNA(Sec), which will be further converted into selenocysteinyl-tRNA(Sec). The chain is Serine--tRNA ligase from Edwardsiella ictaluri (strain 93-146).